The following is a 525-amino-acid chain: Arylsulfatase G (525 aa).

Positions 1-16 are cleaved as a signal peptide; that stretch reads MGWLFLKVLLAGVSFS. Residues D44, D45, and C84 each contribute to the Ca(2+) site. C84 functions as the Nucleophile in the catalytic mechanism. Residue C84 is modified to 3-oxoalanine (Cys). N-linked (GlcNAc...) asparagine glycosylation is present at N117. K137 provides a ligand contact to substrate. H139 is a catalytic residue. S162 contributes to the substrate binding site. N215 carries an N-linked (GlcNAc...) asparagine glycan. H251 contributes to the substrate binding site. D302 and N303 together coordinate Ca(2+). N-linked (GlcNAc...) asparagine glycans are attached at residues N356 and N497.

The protein belongs to the sulfatase family. The cofactor is Ca(2+). N-glycosylated. N-glycosylated with both high mannose and complex type sugars. In terms of processing, the conversion to 3-oxoalanine (also known as C-formylglycine, FGly), of a serine or cysteine residue in prokaryotes and of a cysteine residue in eukaryotes, is critical for catalytic activity. Post-translationally, the 63-kDa precursor undergoes proteolytic processing in two steps, yielding two fragments in the first step (apparent molecular masses of 44 and 18 kDa). In the second step, the 44-kDa fragment is processed further to the 34- and 10-kDa chains. The 10-kDa chain is a cleavage product of the 44-kDa fragment but linked to the 18-kDa chain through a disulfide bridge. In terms of tissue distribution, widely expressed, with very low expression in brain, lung, heart and skeletal muscle.

The protein localises to the lysosome. The catalysed reaction is an aryl sulfate + H2O = a phenol + sulfate + H(+). It catalyses the reaction Hydrolysis of the 3-sulfate groups of the N-sulfo-D-glucosamine 3-O-sulfate units of heparin.. Inhibited by phosphate. The phosphate forms a covalent bond with the active site 3-oxoalanine. Displays arylsulfatase activity at acidic pH towards artificial substrates, such as p-nitrocatechol sulfate and also, but with a lower activity towards p-nitrophenyl sulfate and 4-methylumbelliferyl sulfate. Catalyzes the hydrolysis of the 3-sulfate groups of the N-sulfo-D-glucosamine 3-O-sulfate units of heparin. This is Arylsulfatase G (ARSG) from Homo sapiens (Human).